The primary structure comprises 159 residues: Aspartate carbamoyltransferase regulatory chain (159 aa).

Zn(2+) contacts are provided by C111, C116, C141, and C144.

The protein belongs to the PyrI family. As to quaternary structure, contains catalytic and regulatory chains. Zn(2+) is required as a cofactor.

Involved in allosteric regulation of aspartate carbamoyltransferase. This chain is Aspartate carbamoyltransferase regulatory chain, found in Aeropyrum pernix (strain ATCC 700893 / DSM 11879 / JCM 9820 / NBRC 100138 / K1).